We begin with the raw amino-acid sequence, 282 residues long: Phosphate import ATP-binding protein PstB (282 aa).

Over residues 1–25 the composition is skewed to polar residues; the sequence is MKALNANISTMSEVSRSATPQSDSP. The segment at 1-26 is disordered; that stretch reads MKALNANISTMSEVSRSATPQSDSPA. In terms of domain architecture, ABC transporter spans 36–277; it reads IRIANFNAWY…PQEKRTDDYV (242 aa). Residue 68–75 coordinates ATP; it reads GPSGCGKS.

The protein belongs to the ABC transporter superfamily. Phosphate importer (TC 3.A.1.7) family. As to quaternary structure, the complex is composed of two ATP-binding proteins (PstB), two transmembrane proteins (PstC and PstA) and a solute-binding protein (PstS).

It is found in the cell inner membrane. The catalysed reaction is phosphate(out) + ATP + H2O = ADP + 2 phosphate(in) + H(+). In terms of biological role, part of the ABC transporter complex PstSACB involved in phosphate import. Responsible for energy coupling to the transport system. This is Phosphate import ATP-binding protein PstB from Rhodopirellula baltica (strain DSM 10527 / NCIMB 13988 / SH1).